A 203-amino-acid chain; its full sequence is Large ribosomal subunit protein uL13 (203 aa).

N-acetylalanine is present on Ala2. Arg59 bears the Citrulline mark. Phosphoserine is present on Ser77. Residue Arg140 is modified to Citrulline. Lys191 carries the post-translational modification N6-acetyllysine.

It belongs to the universal ribosomal protein uL13 family. Component of the 60S ribosome. Component of the GAIT complex. Interacts with EIF4G1. Phosphorylation at Ser-77 upon interferon-gamma treatment in macrophages involves a DAPK1-DAPK3 kinase cascade and is causing release from the ribosome, association with the GAIT complex and subsequent involvement in transcript-selective translation inhibition. Post-translationally, citrullinated by PADI4.

It is found in the cytoplasm. Functionally, associated with ribosomes but is not required for canonical ribosome function and has extra-ribosomal functions. Component of the GAIT (gamma interferon-activated inhibitor of translation) complex which mediates interferon-gamma-induced transcript-selective translation inhibition in inflammation processes. Upon interferon-gamma activation and subsequent phosphorylation dissociates from the ribosome and assembles into the GAIT complex which binds to stem loop-containing GAIT elements in the 3'-UTR of diverse inflammatory mRNAs (such as ceruplasmin) and suppresses their translation. In the GAIT complex interacts with m7G cap-bound eIF4G at or near the eIF3-binding site and blocks the recruitment of the 43S ribosomal complex. Involved in methylation of rRNA. The sequence is that of Large ribosomal subunit protein uL13 (Rpl13a) from Rattus norvegicus (Rat).